Here is a 73-residue protein sequence, read N- to C-terminus: Dermaseptin-H4 (73 aa).

The first 22 residues, 1–22 (MAFMKKSLFLVLFLGMVSLSIC), serve as a signal peptide directing secretion. A propeptide spanning residues 23 to 43 (EEEKRENEDEAKQEDDEQSEM) is cleaved from the precursor. The disordered stretch occupies residues 25 to 45 (EKRENEDEAKQEDDEQSEMKR). Over residues 30–40 (EDEAKQEDDEQ) the composition is skewed to acidic residues. At Leu-70 the chain carries Leucine amide. The propeptide occupies 72–73 (EQ).

Expressed by the skin glands.

It localises to the secreted. Its function is as follows. Has antibacterial activity against the Gram-negative bacteria E.coli ATCC 11775 (MIC=0.8 uM), and the Gram-positive bacteria S.aureus ATCC 12600 (MIC=0.4 uM) and M.luteus ATCC 49732 (MIC=0.8 uM). Does not inhibit the growth of the fungus C.albicans. Probably acts by disturbing membrane functions with its amphipathic structure. The polypeptide is Dermaseptin-H4 (Pithecopus azureus (Orange-legged monkey tree frog)).